The primary structure comprises 304 residues: Glycine--tRNA ligase alpha subunit (304 aa).

Belongs to the class-II aminoacyl-tRNA synthetase family. As to quaternary structure, tetramer of two alpha and two beta subunits.

Its subcellular location is the cytoplasm. It carries out the reaction tRNA(Gly) + glycine + ATP = glycyl-tRNA(Gly) + AMP + diphosphate. In Afipia carboxidovorans (strain ATCC 49405 / DSM 1227 / KCTC 32145 / OM5) (Oligotropha carboxidovorans), this protein is Glycine--tRNA ligase alpha subunit.